The sequence spans 141 residues: Endoribonuclease YbeY (141 aa).

Zn(2+) contacts are provided by His-105, His-109, and Asp-115.

Belongs to the endoribonuclease YbeY family. Zn(2+) is required as a cofactor.

Its subcellular location is the cytoplasm. Single strand-specific metallo-endoribonuclease involved in late-stage 70S ribosome quality control and in maturation of the 3' terminus of the 16S rRNA. This chain is Endoribonuclease YbeY, found in Chlorobaculum parvum (strain DSM 263 / NCIMB 8327) (Chlorobium vibrioforme subsp. thiosulfatophilum).